The primary structure comprises 123 residues: Cliotide T4 (123 aa).

Residues 1–28 (MASLRIAPLALFFFLAASVMFTVEKTEA) form the signal peptide. The segment at residues 29–58 (GIPCGESCVFIPCITAAIGCSCKSKVCYRN) is a cross-link (cyclopeptide (Gly-Asn)). Disulfide bonds link cysteine 32/cysteine 48, cysteine 36/cysteine 50, and cysteine 41/cysteine 55. A propeptide spans 59–123 (HVIAAEAKTM…KDHLKMSITN (65 aa)) (removed in mature form).

In terms of processing, contains 3 disulfide bonds. This is a cyclic peptide. In terms of tissue distribution, expressed in flower, stem, shoot, root, leaf, seed, pod and nodule (at protein level).

Functionally, probably participates in a plant defense mechanism. Active against Gram-negative bacteria E.coli ATCC 700926 (MIC=1.0 uM), K.pneumoniae ATTC 13883 (MIC=5.5 uM) and P.aeruginosa ATCC 39018 (MIC=7.5 uM). Has hemolytic and cytotoxic activity. The sequence is that of Cliotide T4 from Clitoria ternatea (Butterfly pea).